We begin with the raw amino-acid sequence, 147 residues long: D-aminoacyl-tRNA deacylase (147 aa).

Residues 136 to 137 (GP) carry the Gly-cisPro motif, important for rejection of L-amino acids motif.

This sequence belongs to the DTD family. As to quaternary structure, homodimer.

It localises to the cytoplasm. It catalyses the reaction glycyl-tRNA(Ala) + H2O = tRNA(Ala) + glycine + H(+). The catalysed reaction is a D-aminoacyl-tRNA + H2O = a tRNA + a D-alpha-amino acid + H(+). Functionally, an aminoacyl-tRNA editing enzyme that deacylates mischarged D-aminoacyl-tRNAs. Also deacylates mischarged glycyl-tRNA(Ala), protecting cells against glycine mischarging by AlaRS. Acts via tRNA-based rather than protein-based catalysis; rejects L-amino acids rather than detecting D-amino acids in the active site. By recycling D-aminoacyl-tRNA to D-amino acids and free tRNA molecules, this enzyme counteracts the toxicity associated with the formation of D-aminoacyl-tRNA entities in vivo and helps enforce protein L-homochirality. The chain is D-aminoacyl-tRNA deacylase from Streptococcus pneumoniae serotype 2 (strain D39 / NCTC 7466).